We begin with the raw amino-acid sequence, 1027 residues long: Contactin-5 (1027 aa).

The N-terminal stretch at 1-19 (MMWLSWKLFLFLSLIGCLS) is a signal peptide. 6 Ig-like C2-type domains span residues 32 to 117 (PDDV…AVLQ), 123 to 209 (NFSG…RVLS), 227 to 307 (PKIE…RNVF), 317 to 401 (PQWV…AELK), 407 to 494 (PTFP…ASVS), and 498 to 593 (PTRI…TELL). Cys50 and Cys100 form a disulfide bridge. Residues Asn65 and Asn123 are each glycosylated (N-linked (GlcNAc...) asparagine). Cystine bridges form between Cys144/Cys196 and Cys249/Cys296. 3 N-linked (GlcNAc...) asparagine glycosylation sites follow: Asn324, Asn376, and Asn467. Intrachain disulfides connect Cys338-Cys385, Cys430-Cys478, and Cys520-Cys577. Fibronectin type-III domains lie at 600–698 (PPGV…TNEA), 703–800 (PPAN…SAEG), 805–899 (APID…TKKS), and 901–994 (PSQA…SYAG). Asn706, Asn743, Asn858, and Asn929 each carry an N-linked (GlcNAc...) asparagine glycan. Ser999 carries the GPI-anchor amidated serine lipid modification. The propeptide at 1000-1027 (AQSTLHMFSTSSSSVTLLLVLMVPSTSW) is removed in mature form.

This sequence belongs to the immunoglobulin superfamily. Contactin family. In terms of assembly, interacts with INgCAM/L1 and the tenascin-R TNP protein. Does not interacts with NrCAM. Expressed by subpopulations of Purkinje cells in the cerebellum. Also expressed by one type of Purkinje cell afferents, the climbing fibers.

The protein resides in the cell membrane. In terms of biological role, contactins mediate cell surface interactions during nervous system development. May contribute to the formation of somatotopic maps of cerebellar afferents during the development of the nervous system. This is Contactin-5 (CNTN5) from Gallus gallus (Chicken).